Here is a 200-residue protein sequence, read N- to C-terminus: MISAQAVKELRERTGAGMMDCKNALIEANGDIEKAIDILREKGLAAAAKKAGRTANEGLVEAYIHGGGRIGVLVEVNCETDFVANTEEFRNFVKEICMQIAAANPKYISKEDVPQEVLEKEKEILRAQALNEGKPANVIDRIVEGRLEKFYKENCLLEQEYIRDPEKTVKDLLNEMIAKLGENIVIRRFARFERGEGIEK.

The involved in Mg(2+) ion dislocation from EF-Tu stretch occupies residues 80 to 83 (TDFV).

Belongs to the EF-Ts family.

It is found in the cytoplasm. Functionally, associates with the EF-Tu.GDP complex and induces the exchange of GDP to GTP. It remains bound to the aminoacyl-tRNA.EF-Tu.GTP complex up to the GTP hydrolysis stage on the ribosome. This chain is Elongation factor Ts, found in Caldanaerobacter subterraneus subsp. tengcongensis (strain DSM 15242 / JCM 11007 / NBRC 100824 / MB4) (Thermoanaerobacter tengcongensis).